The primary structure comprises 139 residues: Inactive palmitoleoyl-protein carboxylesterase notum1b (139 aa).

The protein belongs to the pectinacetylesterase family. Notum subfamily.

Probable inactive palmitoleoyl-protein carboxylesterase. The protein is Inactive palmitoleoyl-protein carboxylesterase notum1b of Danio rerio (Zebrafish).